The chain runs to 111 residues: HTH-type transcriptional regulator SinR (111 aa).

Positions 6-61 (IKQYRKEKGYSLSELAEKAGVAKSYLSSIERNLQTNPSIQFLEKVSAVLDVSVHTL) constitute an HTH cro/C1-type domain. Positions 17 to 36 (LSELAEKAGVAKSYLSSIER) form a DNA-binding region, H-T-H motif. One can recognise a Sin domain in the interval 65–103 (KHETEYDGQLDSEWEKLVRDAMTSGVSKKQFREFLDYQK).

In terms of assembly, homotetramer in the absence of SinI. Heterodimer with SinI. Interaction with SinI disrupts the SinR tetramer and its repressor activity. Interacts with hpr.

Functionally, negative as well as positive regulator of alternate developmental processes that are induced at the end of vegetative growth in response to nutrient depletion. Binds to the alkaline protease (aprE) gene at two sites. Also acts as a repressor of the key sporulation gene spo0A. Negatively regulates transcription of the eps operon, which is responsible for the biosynthesis of an exopolysaccharide involved in biofilm formation; therefore it could govern the transition between a state in which bacteria swim or swarm and a state in which bacteria assemble into multicellular communities. Acts with Hpr as a corepressor of epr expression. Also negatively regulates transcription of the lutABC operon, which is required for lactate utilization. Repressor activity is regulated by SinI. The chain is HTH-type transcriptional regulator SinR (sinR) from Bacillus subtilis (strain 168).